Consider the following 272-residue polypeptide: 3-methyl-2-oxobutanoate hydroxymethyltransferase (272 aa).

The Mg(2+) site is built by Asp-50 and Asp-89. 3-methyl-2-oxobutanoate-binding positions include 50–51, Asp-89, and Lys-119; that span reads DS. Glu-121 serves as a coordination point for Mg(2+). Catalysis depends on Glu-188, which acts as the Proton acceptor.

The protein belongs to the PanB family. As to quaternary structure, homodecamer; pentamer of dimers. Mg(2+) serves as cofactor.

The protein resides in the cytoplasm. It carries out the reaction 3-methyl-2-oxobutanoate + (6R)-5,10-methylene-5,6,7,8-tetrahydrofolate + H2O = 2-dehydropantoate + (6S)-5,6,7,8-tetrahydrofolate. It functions in the pathway cofactor biosynthesis; (R)-pantothenate biosynthesis; (R)-pantoate from 3-methyl-2-oxobutanoate: step 1/2. Catalyzes the reversible reaction in which hydroxymethyl group from 5,10-methylenetetrahydrofolate is transferred onto alpha-ketoisovalerate to form ketopantoate. This is 3-methyl-2-oxobutanoate hydroxymethyltransferase from Methylobacterium radiotolerans (strain ATCC 27329 / DSM 1819 / JCM 2831 / NBRC 15690 / NCIMB 10815 / 0-1).